We begin with the raw amino-acid sequence, 399 residues long: Elongation factor Tu (399 aa).

The region spanning 10 to 207 (KPHVNVGTIG…ALDSYIPEPV (198 aa)) is the tr-type G domain. Positions 19–26 (GHIDHGKT) are G1. Residue 19–26 (GHIDHGKT) coordinates GTP. T26 contributes to the Mg(2+) binding site. The G2 stretch occupies residues 60–64 (GITIN). The tract at residues 81–84 (DCPG) is G3. GTP contacts are provided by residues 81–85 (DCPGH) and 136–139 (NKVD). Residues 136–139 (NKVD) form a G4 region. Positions 174 to 176 (SAL) are G5.

Belongs to the TRAFAC class translation factor GTPase superfamily. Classic translation factor GTPase family. EF-Tu/EF-1A subfamily. In terms of assembly, monomer.

The protein localises to the cytoplasm. The catalysed reaction is GTP + H2O = GDP + phosphate + H(+). GTP hydrolase that promotes the GTP-dependent binding of aminoacyl-tRNA to the A-site of ribosomes during protein biosynthesis. This chain is Elongation factor Tu, found in Pseudothermotoga lettingae (strain ATCC BAA-301 / DSM 14385 / NBRC 107922 / TMO) (Thermotoga lettingae).